Here is a 113-residue protein sequence, read N- to C-terminus: uncharacterized protein (113 aa).

Disordered stretches follow at residues 1-22 (MGEH…PLAQ) and 90-113 (DGRH…SDDL). Residues 90-99 (DGRHTTESSF) are compositionally biased toward basic and acidic residues. Residues 100–113 (EHSSPSRSPQSDDL) are compositionally biased toward low complexity.

This is an uncharacterized protein from Mycobacterium tuberculosis (strain ATCC 25618 / H37Rv).